The primary structure comprises 222 residues: Abasic site processing protein YedK (222 aa).

Cysteine 2 (nucleophile) is an active-site residue. Cysteine 2 carries the post-translational modification Thiazolidine linkage to a ring-opened DNA abasic site. Glutamate 105 is a catalytic residue.

The protein belongs to the SOS response-associated peptidase family.

With respect to regulation, formation and reversal of DNA-protein cross-link depends on DNA context. Catalyzes formation of the thiazolidine linkage in presence of abasic sites in single-stranded DNA. Mediates the reversal of the thiazolidine cross-link in presence of double stranded DNA. Its function is as follows. Sensor of abasic sites in single-stranded DNA (ssDNA) required to preserve genome integrity by promoting error-free repair of abasic sites. Recognizes and binds abasic sites in ssDNA at replication forks and chemically modifies the lesion by forming a covalent cross-link with DNA: forms a stable thiazolidine linkage between a ring-opened abasic site and the alpha-amino and sulfhydryl substituents of its N-terminal catalytic cysteine residue. The DNA-protein cross-link is then reversed: able to catalyze the reversal of the thiazolidine cross-link and cycle between a cross-link and a non-cross-linked state depending on DNA context: mediates self-reversal of the thiazolidine cross-link in double stranded DNA. May act as a protease: mediates autocatalytic processing of its N-terminal methionine in order to expose the catalytic cysteine. The chain is Abasic site processing protein YedK from Escherichia coli (strain K12).